A 96-amino-acid polypeptide reads, in one-letter code: Large ribosomal subunit protein bL27 (96 aa).

The tract at residues 13-33 is disordered; that stretch reads KGGGSTANGRNSAGRRLGAKA.

The protein belongs to the bacterial ribosomal protein bL27 family.

This is Large ribosomal subunit protein bL27 from Lactobacillus acidophilus (strain ATCC 700396 / NCK56 / N2 / NCFM).